We begin with the raw amino-acid sequence, 270 residues long: MDEKYDAALDLLRRLNPNNLTENLQRIIGLEPELAEDLLSSIDVPLKVQQDSKQSGRPFLCCDYNRDVDSYRSPWSNEYFPELSAEDLQESPFPSESLRSLEVLANDSFDVYRDLYYEGGISSVYLWDLDEEGEFAGVVLFKKEGSNKESWDSIHVIEATKGNDDETFTYRLTSTIILALDNKQNDTSLAGNLTRQTEKEAKIDTSNTDISHITNLGTLIEDIESQLRTQLEIVYFEKTRDIFHQTRSQKSTTDSQEQQQKEVIKGLQNL.

Polar residues predominate over residues 245–258 (QTRSQKSTTDSQEQ). The interval 245 to 270 (QTRSQKSTTDSQEQQQKEVIKGLQNL) is disordered.

Belongs to the F-actin-capping protein beta subunit family. In terms of assembly, component of the F-actin capping complex, composed of a heterodimer of an alpha and a beta subunit.

It is found in the cytoplasm. Its subcellular location is the cytoskeleton. The protein resides in the actin patch. F-actin-capping proteins bind in a Ca(2+)-independent manner to the fast growing ends of actin filaments (barbed end) thereby blocking the exchange of subunits at these ends. Unlike other capping proteins (such as gelsolin and severin), these proteins do not sever actin filaments. The polypeptide is F-actin-capping protein subunit beta (CAP2) (Candida glabrata (strain ATCC 2001 / BCRC 20586 / JCM 3761 / NBRC 0622 / NRRL Y-65 / CBS 138) (Yeast)).